The primary structure comprises 345 residues: KH domain-containing, RNA-binding, signal transduction-associated protein 2 (345 aa).

The 67-residue stretch at 65-131 (LIPVKQYPKF…AKHAHLSDEL (67 aa)) folds into the KH domain. 2 disordered regions span residues 178–224 (LNGS…TRGA) and 321–345 (SRST…YGRY). The segment covering 336 to 345 (GYREHPYGRY) has biased composition (basic and acidic residues).

Belongs to the KHDRBS family.

It localises to the nucleus. In terms of biological role, RNA-binding protein that plays a role in the regulation of alternative splicing. This chain is KH domain-containing, RNA-binding, signal transduction-associated protein 2 (khdrbs2), found in Xenopus tropicalis (Western clawed frog).